We begin with the raw amino-acid sequence, 576 residues long: MSTLRLKEAKVPSVQFVGDDDVLSHILDREGGTKLKKEKVQLLVNPQKVIKKAECELEKSDLEVLEDQNYVEVLGRNIQESLGNGSAVDGRNKVYSFQHRKHPEEMTKLALELAKTSGKIDPLASNDPKITKNIARKSKGHSSEKAPLENNNKNEFPSIQPHNVRKRLIASRSHCDSESEYSASSSEDDEEVAKDDEEDTNVVRCSKKSQGQNRLLPAPVSKEILPKKRKRDKAGDLVEEYFEAHSSSKVLTSDRTLQKLRRARVDQKTLRNLLSKFVPSFSTEIGQLNQQHERLFDKWILQLRLGFNIVLYGLGSKRDLLEKFRTTMLQDSIHVVINGFFPGISVKSILNSITEDVLSHMGTFQSVLDQRDWIMNRFKEDSSLELFLLIHNLDSQMLRGDNSQQILGQLSSLRNVYLIASIDHLNAPLMWDHAKQSLYNWLWYETTTYSPYTEETSYENSLLVKQSGSLPLSSLIHVLRSLTPNARGIFRLLMKYQLDNQDCPSYIGLSFQDFYQQCREAFLVNSDLTLRAQLTEFRDHKLIRTKKGTDGVEYLLIPVDSGTLADFLEKEEEEES.

Residues 1–100 (MSTLRLKEAK…RNKVYSFQHR (100 aa)) form an Involved in LRWD1-binding repeat. Position 116 is a phosphothreonine (threonine 116). Positions 119-218 (KIDPLASNDP…SQGQNRLLPA (100 aa)) are disordered. Residues 149–161 (ENNNKNEFPSIQP) are compositionally biased toward polar residues. Residues 186 to 200 (SEDDEEVAKDDEEDT) show a composition bias toward acidic residues. The residue at position 246 (serine 246) is a Phosphoserine.

The protein belongs to the ORC2 family. Component of ORC, a complex composed of at least 6 subunits: ORC1, ORC2, ORC3, ORC4, ORC5 and ORC6. ORC is regulated in a cell-cycle dependent manner. It is sequentially assembled at the exit from anaphase of mitosis and disassembled as cells enter S phase. Interacts with DBF4. Interacts with MCM10. Interacts with LRWD1 throughout the cell cycle; this interaction, which occurs only with non-ubiquitinated form of LRWD1, prevents LRWD1 ubiquitination and hence stabilizes the protein. Interacts with POLQ.

It localises to the nucleus. In terms of biological role, component of the origin recognition complex (ORC) that binds origins of replication. DNA-binding is ATP-dependent. The specific DNA sequences that define origins of replication have not been identified yet. ORC is required to assemble the pre-replication complex necessary to initiate DNA replication. Binds histone H3 and H4 trimethylation marks H3K9me3, H3K20me3 and H4K27me3. Stabilizes LRWD1, by protecting it from ubiquitin-mediated proteasomal degradation. Also stabilizes ORC3. The polypeptide is Origin recognition complex subunit 2 (Orc2) (Rattus norvegicus (Rat)).